Here is a 343-residue protein sequence, read N- to C-terminus: Probable dual-specificity RNA methyltransferase RlmN (343 aa).

The Proton acceptor role is filled by E94. A Radical SAM core domain is found at Y100 to D330. C107 and C335 are disulfide-bonded. [4Fe-4S] cluster-binding residues include C114, C118, and C121. S-adenosyl-L-methionine is bound by residues G161–E162, S193, S216–H218, and N292. Catalysis depends on C335, which acts as the S-methylcysteine intermediate.

This sequence belongs to the radical SAM superfamily. RlmN family. It depends on [4Fe-4S] cluster as a cofactor.

Its subcellular location is the cytoplasm. The enzyme catalyses adenosine(2503) in 23S rRNA + 2 reduced [2Fe-2S]-[ferredoxin] + 2 S-adenosyl-L-methionine = 2-methyladenosine(2503) in 23S rRNA + 5'-deoxyadenosine + L-methionine + 2 oxidized [2Fe-2S]-[ferredoxin] + S-adenosyl-L-homocysteine. It catalyses the reaction adenosine(37) in tRNA + 2 reduced [2Fe-2S]-[ferredoxin] + 2 S-adenosyl-L-methionine = 2-methyladenosine(37) in tRNA + 5'-deoxyadenosine + L-methionine + 2 oxidized [2Fe-2S]-[ferredoxin] + S-adenosyl-L-homocysteine. In terms of biological role, specifically methylates position 2 of adenine 2503 in 23S rRNA and position 2 of adenine 37 in tRNAs. The polypeptide is Probable dual-specificity RNA methyltransferase RlmN (Clostridioides difficile (strain 630) (Peptoclostridium difficile)).